The chain runs to 82 residues: UPF0512 protein P (82 aa).

Belongs to the UPF0512 family.

In Dictyostelium discoideum (Social amoeba), this protein is UPF0512 protein P.